Here is a 174-residue protein sequence, read N- to C-terminus: uncharacterized protein (174 aa).

The helical transmembrane segment at 7–27 threads the bilayer; sequence LIILAIFTLWVGGFGYYLYLI.

Its subcellular location is the membrane. This is an uncharacterized protein from Rickettsia prowazekii (strain Madrid E).